We begin with the raw amino-acid sequence, 425 residues long: Enolase (425 aa).

Glutamine 163 provides a ligand contact to (2R)-2-phosphoglycerate. Glutamate 205 serves as the catalytic Proton donor. 3 residues coordinate Mg(2+): aspartate 242, glutamate 285, and aspartate 312. (2R)-2-phosphoglycerate is bound by residues lysine 337, arginine 366, serine 367, and lysine 388. Residue lysine 337 is the Proton acceptor of the active site.

The protein belongs to the enolase family. Requires Mg(2+) as cofactor.

The protein resides in the cytoplasm. It localises to the secreted. The protein localises to the cell surface. It catalyses the reaction (2R)-2-phosphoglycerate = phosphoenolpyruvate + H2O. It participates in carbohydrate degradation; glycolysis; pyruvate from D-glyceraldehyde 3-phosphate: step 4/5. Its function is as follows. Catalyzes the reversible conversion of 2-phosphoglycerate (2-PG) into phosphoenolpyruvate (PEP). It is essential for the degradation of carbohydrates via glycolysis. This Jannaschia sp. (strain CCS1) protein is Enolase.